Here is a 602-residue protein sequence, read N- to C-terminus: Putative pentatricopeptide repeat-containing protein At1g12700, mitochondrial (602 aa).

The transit peptide at Met-1–Phe-95 directs the protein to the mitochondrion. 14 PPR repeats span residues Ser-87–His-121, Asn-122–Pro-156, Asp-157–Pro-191, Asp-192–Ala-226, Asp-227–Ser-261, Ser-262–Pro-296, Asn-297–Pro-331, Asn-332–Pro-366, Asp-367–Ala-401, Asn-402–Pro-436, Asp-437–Leu-471, Gly-472–Pro-506, Asn-507–Pro-541, and Asn-542–Ala-576.

Belongs to the PPR family. P subfamily.

The protein localises to the mitochondrion. The protein is Putative pentatricopeptide repeat-containing protein At1g12700, mitochondrial of Arabidopsis thaliana (Mouse-ear cress).